The sequence spans 482 residues: Transcription initiation factor IIE subunit alpha (482 aa).

An HTH TFE/IIEalpha-type domain is found at 9-99 (VKNLLKFVVR…KYPHAIDAIK (91 aa)). Residues 124–152 (CPICLTKYTQLEAVQLLNFDRTEFLCSLC) form a C4-type zinc finger. The span at 274-286 (RELQERQAEEKRK) shows a compositional bias: basic and acidic residues. 2 disordered regions span residues 274–295 (RELQ…EWHK) and 321–482 (AMDS…FEDV). The segment covering 321–345 (AMDSINPDNEPAQETSYQNNRTLTE) has biased composition (polar residues). Over residues 374-401 (EEEEEEEEEEDEEEEEEEEMEDVMDDND) the composition is skewed to acidic residues. The span at 419 to 432 (TAGTAKTESNTSND) shows a compositional bias: polar residues. The span at 433–444 (VKQESINDKTED) shows a compositional bias: basic and acidic residues. Acidic residues predominate over residues 464-482 (GDDDDDDDDDEMDIEFEDV).

The protein belongs to the TFIIE alpha subunit family. TFIIE is a tetramer of two alpha (TFA1) and two beta (TFA2) subunits.

The protein localises to the nucleus. Recruits TFIIH to the initiation complex and stimulates the RNA polymerase II C-terminal domain kinase and DNA-dependent ATPase activities of TFIIH. Both TFIIH and TFIIE are required for promoter clearance by RNA polymerase. The chain is Transcription initiation factor IIE subunit alpha (TFA1) from Saccharomyces cerevisiae (strain ATCC 204508 / S288c) (Baker's yeast).